Consider the following 156-residue polypeptide: Snaclec A2 (156 aa).

The signal sequence occupies residues 1–23 (MGRLISVSFGLLVVFLSLSGTGA). Cystine bridges form between cysteine 27–cysteine 38, cysteine 55–cysteine 154, and cysteine 129–cysteine 146. The 122-residue stretch at 34 to 155 (HEGHCYKVFN…CGQPYRFTCE (122 aa)) folds into the C-type lectin domain.

The protein belongs to the snaclec family. In terms of assembly, heterodimer; disulfide-linked. Expressed by the venom gland.

The protein resides in the secreted. Its function is as follows. Interferes with one step of hemostasis (modulation of platelet aggregation, or coagulation cascade, for example). The protein is Snaclec A2 of Macrovipera lebetinus (Levantine viper).